Reading from the N-terminus, the 78-residue chain is MGGISIWQLLIVALIVVLLFGTKKLRSLGGDLGGAVKGFKSAMSSEEEKKAIEDSASEKTAQTEEKKTESKDKDKEQV.

Residues 1–21 (MGGISIWQLLIVALIVVLLFG) form a helical membrane-spanning segment. A disordered region spans residues 40–78 (KSAMSSEEEKKAIEDSASEKTAQTEEKKTESKDKDKEQV). Residues 46 to 78 (EEEKKAIEDSASEKTAQTEEKKTESKDKDKEQV) show a composition bias toward basic and acidic residues.

Belongs to the TatA/E family. As to quaternary structure, the Tat system comprises two distinct complexes: a TatABC complex, containing multiple copies of TatA, TatB and TatC subunits, and a separate TatA complex, containing only TatA subunits. Substrates initially bind to the TatABC complex, which probably triggers association of the separate TatA complex to form the active translocon.

It localises to the cell inner membrane. Its function is as follows. Part of the twin-arginine translocation (Tat) system that transports large folded proteins containing a characteristic twin-arginine motif in their signal peptide across membranes. TatA could form the protein-conducting channel of the Tat system. This chain is Sec-independent protein translocase protein TatA, found in Shewanella sediminis (strain HAW-EB3).